Consider the following 349-residue polypeptide: Draxin (349 aa).

An N-terminal signal peptide occupies residues 1-25 (MAGPAIHTAPMLFLVLLLPLELSLA). Disordered stretches follow at residues 38 to 79 (PENH…QDGA), 118 to 145 (PYPE…RRDR), and 244 to 273 (DGWP…EGEP). A compositionally biased stretch (basic and acidic residues) spans 120–131 (PEKENRPPGWER). Composition is skewed to basic residues over residues 132-145 (TRKR…RRDR) and 249-258 (AKKKEKHRGK). Asn-264 is a glycosylation site (N-linked (GlcNAc...) asparagine).

It belongs to the draxin family. In terms of assembly, interacts with LRP6.

It is found in the secreted. In terms of biological role, chemorepulsive axon guidance protein required for the development of spinal cord and forebrain commissures. Acts as a chemorepulsive guidance protein for commissural axons during development. Able to inhibit or repel neurite outgrowth from dorsal spinal cord. Inhibits the stabilization of cytosolic beta-catenin (CTNNB1) via its interaction with LRP6, thereby acting as an antagonist of Wnt signaling pathway. In Homo sapiens (Human), this protein is Draxin.